The chain runs to 320 residues: tRNA (guanine(10)-N2)-dimethyltransferase (320 aa).

A THUMP domain is found at 46-136; the sequence is EKFFERLAYT…DDKCYVGLLE (91 aa).

Belongs to the methyltransferase superfamily. Trm-G10 family. In terms of assembly, monomer.

It localises to the cytoplasm. The enzyme catalyses guanosine(10) in tRNA + 2 S-adenosyl-L-methionine = N(2)-dimethylguanosine(10) in tRNA + 2 S-adenosyl-L-homocysteine + 2 H(+). Functionally, catalyzes the adenosylmethionine-dependent methylation of the exocyclic amino group (N(2)) of guanosine at position 10 of various tRNAs. Acts via a two-step process that leads to the formation of either N(2)-monomethyl (m(2)G) or N(2)-dimethylguanosine (m(2)(2)G). The protein is tRNA (guanine(10)-N2)-dimethyltransferase (trmG10) of Archaeoglobus fulgidus (strain ATCC 49558 / DSM 4304 / JCM 9628 / NBRC 100126 / VC-16).